The following is a 483-amino-acid chain: Glutamyl-tRNA(Gln) amidotransferase subunit A (483 aa).

Active-site charge relay system residues include Lys-76 and Ser-151. Ser-175 acts as the Acyl-ester intermediate in catalysis.

It belongs to the amidase family. GatA subfamily. Heterotrimer of A, B and C subunits.

It catalyses the reaction L-glutamyl-tRNA(Gln) + L-glutamine + ATP + H2O = L-glutaminyl-tRNA(Gln) + L-glutamate + ADP + phosphate + H(+). Functionally, allows the formation of correctly charged Gln-tRNA(Gln) through the transamidation of misacylated Glu-tRNA(Gln) in organisms which lack glutaminyl-tRNA synthetase. The reaction takes place in the presence of glutamine and ATP through an activated gamma-phospho-Glu-tRNA(Gln). The sequence is that of Glutamyl-tRNA(Gln) amidotransferase subunit A from Pseudomonas syringae pv. syringae (strain B728a).